Consider the following 252-residue polypeptide: Pyridoxine 5'-phosphate synthase (252 aa).

Positions 8 and 19 each coordinate 3-amino-2-oxopropyl phosphate. Residue histidine 44 is the Proton acceptor of the active site. Residues arginine 46 and histidine 51 each coordinate 1-deoxy-D-xylulose 5-phosphate. Glutamate 75 (proton acceptor) is an active-site residue. Position 110 (threonine 110) interacts with 1-deoxy-D-xylulose 5-phosphate. Histidine 201 (proton donor) is an active-site residue. Residues aspartate 202 and 224-225 each bind 3-amino-2-oxopropyl phosphate; that span reads GH.

This sequence belongs to the PNP synthase family. As to quaternary structure, homooctamer; tetramer of dimers.

The protein resides in the cytoplasm. The enzyme catalyses 3-amino-2-oxopropyl phosphate + 1-deoxy-D-xylulose 5-phosphate = pyridoxine 5'-phosphate + phosphate + 2 H2O + H(+). It participates in cofactor biosynthesis; pyridoxine 5'-phosphate biosynthesis; pyridoxine 5'-phosphate from D-erythrose 4-phosphate: step 5/5. In terms of biological role, catalyzes the complicated ring closure reaction between the two acyclic compounds 1-deoxy-D-xylulose-5-phosphate (DXP) and 3-amino-2-oxopropyl phosphate (1-amino-acetone-3-phosphate or AAP) to form pyridoxine 5'-phosphate (PNP) and inorganic phosphate. This is Pyridoxine 5'-phosphate synthase from Albidiferax ferrireducens (strain ATCC BAA-621 / DSM 15236 / T118) (Rhodoferax ferrireducens).